The chain runs to 1035 residues: Unconventional myosin IC (1035 aa).

Residues 21–703 (GVQDFVLLEN…TLFDTEDAYQ (683 aa)) form the Myosin motor domain. Residue 114–121 (GESGSGKT) coordinates ATP. A Phosphoserine modification is found at Ser-304. Thr-310 is subject to Phosphothreonine. An actin-binding region spans residues 578 to 600 (LNNLMDILMCKEPSYIRCIKPND). 3 consecutive IQ domains span residues 696–728 (FDTE…KYLK), 729–751 (LRAQ…AAKK), and 752–779 (RREA…FNEE). In terms of domain architecture, TH1 spans 857 to 1035 (KNNYASSVST…KGHLVIIGTQ (179 aa)).

Belongs to the TRAFAC class myosin-kinesin ATPase superfamily. Myosin family. As to quaternary structure, binds F-actin. As to expression, in the embryo, expressed in gastric caeca, midgut cells of the proventriculus, and in the mid and hindgut. In the larval and adult gut brush border, expressed in the microvilli. Also expressed at high levels in follicle cells during oogenesis.

Its subcellular location is the cytoplasm. It is found in the cell cortex. It localises to the cell membrane. Functionally, unconventional myosin that functions as actin-based motor protein with ATPase activity. Binds to membranes enriched in phosphatidylinositol 4-5-bisphosphate, and can glide along actin filaments when anchored to a lipid bilayer. Functions as antagonist for Myo31DF, an unconventional myosin with an essential role in the establishment of body left-right asymmetry. The sequence is that of Unconventional myosin IC (Myo61F) from Drosophila melanogaster (Fruit fly).